Reading from the N-terminus, the 472-residue chain is 3-isopropylmalate dehydratase large subunit (472 aa).

[4Fe-4S] cluster contacts are provided by Cys347, Cys407, and Cys410.

This sequence belongs to the aconitase/IPM isomerase family. LeuC type 1 subfamily. As to quaternary structure, heterodimer of LeuC and LeuD. [4Fe-4S] cluster serves as cofactor.

The enzyme catalyses (2R,3S)-3-isopropylmalate = (2S)-2-isopropylmalate. It functions in the pathway amino-acid biosynthesis; L-leucine biosynthesis; L-leucine from 3-methyl-2-oxobutanoate: step 2/4. In terms of biological role, catalyzes the isomerization between 2-isopropylmalate and 3-isopropylmalate, via the formation of 2-isopropylmaleate. This chain is 3-isopropylmalate dehydratase large subunit, found in Bacillus licheniformis (strain ATCC 14580 / DSM 13 / JCM 2505 / CCUG 7422 / NBRC 12200 / NCIMB 9375 / NCTC 10341 / NRRL NRS-1264 / Gibson 46).